A 197-amino-acid chain; its full sequence is Probable chemoreceptor glutamine deamidase CheD 2 (197 aa).

The protein belongs to the CheD family.

The catalysed reaction is L-glutaminyl-[protein] + H2O = L-glutamyl-[protein] + NH4(+). In terms of biological role, probably deamidates glutamine residues to glutamate on methyl-accepting chemotaxis receptors (MCPs), playing an important role in chemotaxis. This is Probable chemoreceptor glutamine deamidase CheD 2 from Dechloromonas aromatica (strain RCB).